The primary structure comprises 825 residues: Quinic acid utilization activator (825 aa).

The segment covering 1–12 (MSSDTRQTSGGN) has biased composition (polar residues). Positions 1–45 (MSSDTRQTSGGNARSKRRLTDAVDEDGRPTATAEDPTSNPKRQRV) are disordered. The span at 18–28 (RLTDAVDEDGR) shows a compositional bias: basic and acidic residues. A DNA-binding region (zn(2)-C6 fungal-type) is located at residues 49-76 (CDSCRSKKDKCDGAQPICSTCASLSRPC). Disordered regions lie at residues 160 to 186 (EQPEGDQERSARGEIDSPADAEESSVL), 204 to 224 (QSPLASGPSPVRLPRPSTTRL), and 658 to 683 (GSQRRPRHATQQGTHPRSPMAISLPG). The segment covering 165 to 174 (DQERSARGEI) has biased composition (basic and acidic residues). Over residues 658–672 (GSQRRPRHATQQGTH) the composition is skewed to polar residues.

The protein resides in the nucleus. Transcription activation of genes for enzymes and proteins of quinate metabolism by binding to a 16 base-pair sequence (consensus 5'-GGATAANNNNTTATCC-3') in front of each qut gene. This Emericella nidulans (strain FGSC A4 / ATCC 38163 / CBS 112.46 / NRRL 194 / M139) (Aspergillus nidulans) protein is Quinic acid utilization activator (qutA).